Reading from the N-terminus, the 417-residue chain is Gamma-glutamyl phosphate reductase (417 aa).

The protein belongs to the gamma-glutamyl phosphate reductase family.

The protein localises to the cytoplasm. The enzyme catalyses L-glutamate 5-semialdehyde + phosphate + NADP(+) = L-glutamyl 5-phosphate + NADPH + H(+). It functions in the pathway amino-acid biosynthesis; L-proline biosynthesis; L-glutamate 5-semialdehyde from L-glutamate: step 2/2. Catalyzes the NADPH-dependent reduction of L-glutamate 5-phosphate into L-glutamate 5-semialdehyde and phosphate. The product spontaneously undergoes cyclization to form 1-pyrroline-5-carboxylate. This chain is Gamma-glutamyl phosphate reductase, found in Haemophilus influenzae (strain PittEE).